The following is a 176-amino-acid chain: NAD(P)H-quinone oxidoreductase subunit 6, chloroplastic (176 aa).

5 helical membrane-spanning segments follow: residues 10–30 (FLLVFLGSGLIVGGLGVVLLP), 33–53 (IFSAFSLGFVLVCISLLYILA), 61–81 (AQLLIYVGAINVLIIFAVMFM), 92–112 (LWTVGDGITSLVCTTLLFSLI), and 152–172 (FFLPFELISIILLVALIGAIS).

It belongs to the complex I subunit 6 family. NDH is composed of at least 16 different subunits, 5 of which are encoded in the nucleus.

Its subcellular location is the plastid. The protein localises to the chloroplast thylakoid membrane. The enzyme catalyses a plastoquinone + NADH + (n+1) H(+)(in) = a plastoquinol + NAD(+) + n H(+)(out). The catalysed reaction is a plastoquinone + NADPH + (n+1) H(+)(in) = a plastoquinol + NADP(+) + n H(+)(out). NDH shuttles electrons from NAD(P)H:plastoquinone, via FMN and iron-sulfur (Fe-S) centers, to quinones in the photosynthetic chain and possibly in a chloroplast respiratory chain. The immediate electron acceptor for the enzyme in this species is believed to be plastoquinone. Couples the redox reaction to proton translocation, and thus conserves the redox energy in a proton gradient. This chain is NAD(P)H-quinone oxidoreductase subunit 6, chloroplastic (ndhG), found in Arabis hirsuta (Hairy rock-cress).